Reading from the N-terminus, the 531-residue chain is Outer dynein arm-docking complex subunit 4 (531 aa).

TPR repeat units follow at residues 15 to 48 (FSTY…QPEE), 50 to 82 (NCLV…ENDF), and 83 to 116 (FKGL…RPEF). The interval 161 to 185 (KQKAQVKVQKKDSKQQKKVDPERSQ) is disordered. Over residues 169-185 (QKKDSKQQKKVDPERSQ) the composition is skewed to basic and acidic residues. 5 TPR repeats span residues 275–307 (VKSL…VERW), 320–353 (GSLH…AEKY), 360–393 (SRAL…ANSS), 397–430 (TWLY…ADAA), and 437–470 (LNAC…ARLL). The tract at residues 487-531 (KQGMEEQQESEQNNDENDNLRADGNTARDEEEEDVHVQRTEEDEG) is disordered. Acidic residues predominate over residues 492-503 (EQQESEQNNDEN). Basic and acidic residues predominate over residues 521–531 (VHVQRTEEDEG).

In terms of assembly, component of the outer dynein arm-docking complex. In the mucociliary epithelium, specifically expressed in ciliated cells.

It is found in the cytoplasm. The protein localises to the cytoskeleton. Its subcellular location is the cilium axoneme. Component of the outer dynein arm-docking complex (ODA-DC) that mediates outer dynein arms (ODA) binding onto the doublet microtubule. Plays an essential role for the assembly of ODA-DC and in the docking of ODA in ciliary axoneme. Functionally, required for the docking of the outer dynein arm to cilia, hence plays an essential role in cilia motility. The protein is Outer dynein arm-docking complex subunit 4 (odad4) of Xenopus laevis (African clawed frog).